A 298-amino-acid polypeptide reads, in one-letter code: 33 kDa chaperonin (298 aa).

Disulfide bonds link Cys239–Cys241 and Cys272–Cys275.

This sequence belongs to the HSP33 family. In terms of processing, under oxidizing conditions two disulfide bonds are formed involving the reactive cysteines. Under reducing conditions zinc is bound to the reactive cysteines and the protein is inactive.

The protein resides in the cytoplasm. Its function is as follows. Redox regulated molecular chaperone. Protects both thermally unfolding and oxidatively damaged proteins from irreversible aggregation. Plays an important role in the bacterial defense system toward oxidative stress. This Picosynechococcus sp. (strain ATCC 27264 / PCC 7002 / PR-6) (Agmenellum quadruplicatum) protein is 33 kDa chaperonin.